A 471-amino-acid polypeptide reads, in one-letter code: Indole-3-acetate beta-glucosyltransferase (471 aa).

The active-site Proton acceptor is His-15. His-15 provides a ligand contact to an anthocyanidin. Catalysis depends on Asp-107, which acts as the Charge relay. Residues Thr-129, Gln-344, His-359, Trp-362, Asn-363, Ser-364, Glu-367, Asp-383, and Gln-384 each coordinate UDP-alpha-D-glucose.

The protein belongs to the UDP-glycosyltransferase family.

It carries out the reaction (indol-3-yl)acetate + UDP-alpha-D-glucose = 1-O-(indol-3-ylacetyl)-beta-D-glucose + UDP. Its pathway is plant hormone metabolism; auxin conjugation. The chain is Indole-3-acetate beta-glucosyltransferase (IAGLU) from Zea mays (Maize).